Here is a 124-residue protein sequence, read N- to C-terminus: MARLVGVDLPRDKRMEIALTYIYGVGRTRSQEILEATGIDRDLRTKDLTDDQVTQLRDYIEANLKVEGDLRREVQADIRRKIEIGCYQGLRHRRGLPVRGQRTKTNARTRKGPKRTIAGKKKAR.

A disordered region spans residues 95-124 (GLPVRGQRTKTNARTRKGPKRTIAGKKKAR).

It belongs to the universal ribosomal protein uS13 family. As to quaternary structure, part of the 30S ribosomal subunit. Forms a loose heterodimer with protein S19. Forms two bridges to the 50S subunit in the 70S ribosome.

Functionally, located at the top of the head of the 30S subunit, it contacts several helices of the 16S rRNA. In the 70S ribosome it contacts the 23S rRNA (bridge B1a) and protein L5 of the 50S subunit (bridge B1b), connecting the 2 subunits; these bridges are implicated in subunit movement. Contacts the tRNAs in the A and P-sites. The chain is Small ribosomal subunit protein uS13 from Mycobacterium sp. (strain JLS).